The chain runs to 307 residues: Ribonuclease Z (307 aa).

Zn(2+) is bound by residues His61, His63, Asp65, His66, His138, Asp208, and His264. The Proton acceptor role is filled by Asp65.

It belongs to the RNase Z family. Homodimer. Zn(2+) serves as cofactor.

It carries out the reaction Endonucleolytic cleavage of RNA, removing extra 3' nucleotides from tRNA precursor, generating 3' termini of tRNAs. A 3'-hydroxy group is left at the tRNA terminus and a 5'-phosphoryl group is left at the trailer molecule.. Its function is as follows. Zinc phosphodiesterase, which displays some tRNA 3'-processing endonuclease activity. Probably involved in tRNA maturation, by removing a 3'-trailer from precursor tRNA. The protein is Ribonuclease Z of Pyrococcus horikoshii (strain ATCC 700860 / DSM 12428 / JCM 9974 / NBRC 100139 / OT-3).